Reading from the N-terminus, the 155-residue chain is RNA pyrophosphohydrolase (155 aa).

The Nudix hydrolase domain maps to 5–147; that stretch reads KYRPNVAAII…KRQVYRQVIA (143 aa). The Nudix box motif lies at 42 to 63; it reads GGIDEGETPLEALYRELLEEIG.

This sequence belongs to the Nudix hydrolase family. RppH subfamily. The cofactor is a divalent metal cation.

Accelerates the degradation of transcripts by removing pyrophosphate from the 5'-end of triphosphorylated RNA, leading to a more labile monophosphorylated state that can stimulate subsequent ribonuclease cleavage. In Helicobacter pylori (strain P12), this protein is RNA pyrophosphohydrolase.